A 169-amino-acid polypeptide reads, in one-letter code: 2-C-methyl-D-erythritol 2,4-cyclodiphosphate synthase (169 aa).

Residues aspartate 13 and histidine 15 each coordinate a divalent metal cation. Residues aspartate 13 to histidine 15 and histidine 39 to serine 40 contribute to the 4-CDP-2-C-methyl-D-erythritol 2-phosphate site. Residue histidine 47 participates in a divalent metal cation binding. Residues aspartate 61–glycine 63, phenylalanine 66–aspartate 70, phenylalanine 144, and arginine 147 each bind 4-CDP-2-C-methyl-D-erythritol 2-phosphate.

It belongs to the IspF family. In terms of assembly, homotrimer. The cofactor is a divalent metal cation.

The enzyme catalyses 4-CDP-2-C-methyl-D-erythritol 2-phosphate = 2-C-methyl-D-erythritol 2,4-cyclic diphosphate + CMP. It participates in isoprenoid biosynthesis; isopentenyl diphosphate biosynthesis via DXP pathway; isopentenyl diphosphate from 1-deoxy-D-xylulose 5-phosphate: step 4/6. Involved in the biosynthesis of isopentenyl diphosphate (IPP) and dimethylallyl diphosphate (DMAPP), two major building blocks of isoprenoid compounds. Catalyzes the conversion of 4-diphosphocytidyl-2-C-methyl-D-erythritol 2-phosphate (CDP-ME2P) to 2-C-methyl-D-erythritol 2,4-cyclodiphosphate (ME-CPP) with a corresponding release of cytidine 5-monophosphate (CMP). The polypeptide is 2-C-methyl-D-erythritol 2,4-cyclodiphosphate synthase (Cupriavidus necator (strain ATCC 17699 / DSM 428 / KCTC 22496 / NCIMB 10442 / H16 / Stanier 337) (Ralstonia eutropha)).